We begin with the raw amino-acid sequence, 348 residues long: Dihydroorotase (348 aa).

Histidine 17 and histidine 19 together coordinate Zn(2+). Substrate-binding positions include 19–21 and asparagine 45; that span reads HLR. Positions 103, 140, and 178 each coordinate Zn(2+). Lysine 103 is subject to N6-carboxylysine. Histidine 140 contacts substrate. Position 223 (leucine 223) interacts with substrate. Residue aspartate 251 coordinates Zn(2+). Aspartate 251 is an active-site residue. Residues histidine 255 and alanine 267 each coordinate substrate.

The protein belongs to the metallo-dependent hydrolases superfamily. DHOase family. Class II DHOase subfamily. In terms of assembly, homodimer. Zn(2+) serves as cofactor.

The catalysed reaction is (S)-dihydroorotate + H2O = N-carbamoyl-L-aspartate + H(+). It participates in pyrimidine metabolism; UMP biosynthesis via de novo pathway; (S)-dihydroorotate from bicarbonate: step 3/3. In terms of biological role, catalyzes the reversible cyclization of carbamoyl aspartate to dihydroorotate. In Shigella boydii serotype 18 (strain CDC 3083-94 / BS512), this protein is Dihydroorotase.